We begin with the raw amino-acid sequence, 404 residues long: Multidrug resistance protein MdtG (404 aa).

A run of 11 helical transmembrane segments spans residues 19-39, 56-76, 90-110, 113-133, 144-164, 171-191, 222-242, 254-274, 288-308, 317-337, and 376-396; these read LGCF…PLYV, LVFS…GGLA, LGMA…QFLI, ALLG…ATQV, TLST…GLLA, PVFF…FFFI, LFVT…ILTL, IAFI…LSAP, ILIV…FVQT, FLLG…LVYN, and AVFC…WNSL.

Belongs to the major facilitator superfamily. DHA1 family. MdtG (TC 2.A.1.2.20) subfamily.

The protein resides in the cell inner membrane. This is Multidrug resistance protein MdtG from Salmonella agona (strain SL483).